The following is a 664-amino-acid chain: Serine/threonine-protein kinase PknD (664 aa).

The Cytoplasmic portion of the chain corresponds to 1-381 (MSDAVPQVGS…PAGNKRKVWA (381 aa)). The Protein kinase domain occupies 15–276 (YQLLRLLGRG…DLAIAAHDAL (262 aa)). ATP is bound by residues 21 to 29 (LGRGGMGEV) and Lys44. Thr135 bears the Phosphothreonine; by autocatalysis mark. The active-site Proton acceptor is Asp138. A phosphothreonine; by autocatalysis mark is found at Thr169, Thr171, Thr173, and Thr209. The segment at 303 to 333 (TGLSQSESGIAGAGTGPPTPGAARWSPGDSA) is disordered. A helical transmembrane segment spans residues 382-402 (VVGAAAIVLVAIVAAAGYLVL). Residues 403-664 (RPSWSPTQAS…GNDRVVKLTS (262 aa)) lie on the Extracellular side of the membrane. 6 NHL repeats span residues 414 to 456 (QTVL…LATG), 457 to 497 (STGT…LAAG), 498 to 539 (SNNQ…LAAG), 540 to 581 (SKTQ…LEAE), 582 to 623 (SNNQ…LLAG), and 624 to 664 (STTS…KLTS).

Belongs to the protein kinase superfamily. Ser/Thr protein kinase family. As to quaternary structure, homodimer. The extracellular domain interacts with host laminin. In terms of processing, autophosphorylated. Dephosphorylated by PstP.

Its subcellular location is the cell membrane. It carries out the reaction L-seryl-[protein] + ATP = O-phospho-L-seryl-[protein] + ADP + H(+). The catalysed reaction is L-threonyl-[protein] + ATP = O-phospho-L-threonyl-[protein] + ADP + H(+). With respect to regulation, dimerization activates the kinase domain of unphosphorylated PknD via an allosteric mechanism, triggering autophosphorylation and phosphorylation of target proteins. Phosphorylated PknD is fully active even in the absence of dimerization. Its function is as follows. Part of a signaling pathway that enables adaptation to osmotic stress through cell wall remodeling and virulence factor production. Key microbial factor required for central nervous system tuberculosis. Required for invasion of host brain endothelia, but not macrophages, lung epithelia or other endothelia. The sequence is that of Serine/threonine-protein kinase PknD (pknD) from Mycobacterium tuberculosis (strain CDC 1551 / Oshkosh).